A 350-amino-acid polypeptide reads, in one-letter code: Meiotic driver wtf30 (350 aa).

The interval 1-92 (MKNKYYPLRS…RENHSSGTTD (92 aa)) is disordered. Residues 11-29 (SIDELSTKNDNEIDLEKGP) show a composition bias toward basic and acidic residues. The span at 57-72 (GANNPNLFNTDESTTP) shows a compositional bias: polar residues. A run of 7 helical transmembrane segments spans residues 97-117 (FLIK…PAVC), 134-154 (WVYF…LWCF), 165-185 (CVKV…IGLF), 190-210 (EMMI…FVYI), 226-246 (CTIS…FWTF), 253-273 (LAKV…TMFL), and 280-300 (WTGC…LFLC).

The protein belongs to the WTF family. As to quaternary structure, homomer. Forms protein aggregates. The two isoforms can interact with each other and with themselves. High sequence similarity is required for their interaction.

It is found in the spore membrane. The protein localises to the vacuole membrane. It localises to the ascus epiplasm. The protein resides in the cytoplasm. Its subcellular location is the endoplasmic reticulum membrane. In terms of biological role, promotes unequal transmission of alleles from the parental zygote to progeny spores by acting as poison/antidote system where the poison and antidote proteins are produced from the same locus; the poison component is trans-acting and targets all spores within an ascus whereas the antidote component is spore-specific, leading to poisoning of all progeny that do not inherit the allele. Localizes isoform 2 to the vacuole thereby facilitating its degradation. Functionally, forms toxic aggregates that disrupt spore maturation. The polypeptide is Meiotic driver wtf30 (Schizosaccharomyces kambucha (Fission yeast)).